The primary structure comprises 568 residues: MTVSTFNRTWAKVIVNALLRYGVKHFCIAPGSRSTPLTLEALQLQQNQQAQCHSHFDERGLGFFALGIAKVTNDPVAIIVTSGTAVANLYPAIIEASLTHHKLIVLSADRPPELIGCGANQAIPQQGIFADYPIAGVNLPKPAEHYNAGWLVATIEQACVTQSQQGGVVHINAPFAEPLYEADENAINTHPWLKPIQSWLINPQTKWINSQTIQSEVSMHENWDYWRTKRGVIVVGKLPVEQGIGIKAWAETLGWCLITDVQSCVDANLPYADIWLSNNTVHQRLLQADIVIQFGGQIVSKRVNKFLEAFKGEFWQVDEYSDYLNPFAHHQTRFVAKAHHFLRVHPPLRQKPWLLEPLALSQFCAGFIEQQVGGSLNEASLAHHIEEVLATSGNLFIGNSLFVRLVDALCKLPEGYPVYTNRGASGIDGLIATMAGVAKGSGQPTVGVIGDISALHDLNSVSLLNKISHPCILFVINNSGGAIFDMLPVEAQAKEQFYRLSHNYEFAPIATMFGIEYIRPFTWADLKAKLKLAYGRKGVTIVEIKVNDQDGSNLYKSLVKQISQAEIA.

The protein belongs to the TPP enzyme family. MenD subfamily. In terms of assembly, homodimer. Mg(2+) serves as cofactor. Requires Mn(2+) as cofactor. The cofactor is thiamine diphosphate.

The catalysed reaction is isochorismate + 2-oxoglutarate + H(+) = 5-enolpyruvoyl-6-hydroxy-2-succinyl-cyclohex-3-ene-1-carboxylate + CO2. The protein operates within quinol/quinone metabolism; 1,4-dihydroxy-2-naphthoate biosynthesis; 1,4-dihydroxy-2-naphthoate from chorismate: step 2/7. It participates in quinol/quinone metabolism; menaquinone biosynthesis. Catalyzes the thiamine diphosphate-dependent decarboxylation of 2-oxoglutarate and the subsequent addition of the resulting succinic semialdehyde-thiamine pyrophosphate anion to isochorismate to yield 2-succinyl-5-enolpyruvyl-6-hydroxy-3-cyclohexene-1-carboxylate (SEPHCHC). The chain is 2-succinyl-5-enolpyruvyl-6-hydroxy-3-cyclohexene-1-carboxylate synthase from Actinobacillus pleuropneumoniae serotype 5b (strain L20).